Reading from the N-terminus, the 270-residue chain is Mlc titration factor A (270 aa).

4 residues coordinate Zn(2+): His111, His148, His152, and Glu211.

This sequence belongs to the MtfA family. Interacts with Mlc. It depends on Zn(2+) as a cofactor.

The protein localises to the cytoplasm. Its function is as follows. Involved in the modulation of the activity of the glucose-phosphotransferase system (glucose-PTS). Interacts with the transcriptional repressor Mlc, preventing its interaction with DNA and leading to the modulation of expression of genes regulated by Mlc, including ptsG, which encodes the PTS system glucose-specific EIICB component. Shows zinc-dependent metallopeptidase activity. This Yersinia pestis bv. Antiqua (strain Nepal516) protein is Mlc titration factor A.